The chain runs to 379 residues: Chaperone protein DnaJ (379 aa).

The region spanning 7–72 is the J domain; it reads DYYEVLGVDK…KKRSMYDQFG (66 aa). The segment at 147-225 adopts a CR-type zinc-finger fold; sequence GKKAELSYTR…CGGNGLERKK (79 aa). Zn(2+)-binding residues include Cys160, Cys163, Cys177, Cys180, Cys199, Cys202, Cys213, and Cys216. 4 CXXCXGXG motif repeats span residues 160-167, 177-184, 199-206, and 213-220; these read CSECHGTG, CPDCKGTG, CPTCGGEG, and CKKCGGNG.

This sequence belongs to the DnaJ family. Homodimer. The cofactor is Zn(2+).

It localises to the cytoplasm. Functionally, participates actively in the response to hyperosmotic and heat shock by preventing the aggregation of stress-denatured proteins and by disaggregating proteins, also in an autonomous, DnaK-independent fashion. Unfolded proteins bind initially to DnaJ; upon interaction with the DnaJ-bound protein, DnaK hydrolyzes its bound ATP, resulting in the formation of a stable complex. GrpE releases ADP from DnaK; ATP binding to DnaK triggers the release of the substrate protein, thus completing the reaction cycle. Several rounds of ATP-dependent interactions between DnaJ, DnaK and GrpE are required for fully efficient folding. Also involved, together with DnaK and GrpE, in the DNA replication of plasmids through activation of initiation proteins. This Treponema denticola (strain ATCC 35405 / DSM 14222 / CIP 103919 / JCM 8153 / KCTC 15104) protein is Chaperone protein DnaJ.